Consider the following 94-residue polypeptide: Neutrophil defensin 6 (94 aa).

The N-terminal stretch at 1-19 is a signal peptide; that stretch reads MRTIAILAAILLFALLAQA. Residues 20–61 constitute a propeptide that is removed on maturation; that stretch reads KSLQETADEAATQEQPGEDDQDLAVSFEENGLSTLRASGSQA. 3 cysteine pairs are disulfide-bonded: C65-C93, C67-C82, and C72-C92.

The protein belongs to the alpha-defensin family.

The protein localises to the secreted. Functionally, defensins 6 and 7 have bacteriostatic activity against Gram-positive bacteria S.aureus and L.monocytogenes and Gram-negative bacterium E.coli and antifungal activity against C.neoformans. Defensin 7 has microbicidial activity against Gram-positive bacteria S.aureus and L.monocytogenes. The sequence is that of Neutrophil defensin 6 from Macaca mulatta (Rhesus macaque).